We begin with the raw amino-acid sequence, 153 residues long: 6,7-dimethyl-8-ribityllumazine synthase (153 aa).

Residues Phe-22, 56-58, and 80-82 each bind 5-amino-6-(D-ribitylamino)uracil; these read AFE and AVI. Residue 85 to 86 participates in (2S)-2-hydroxy-3-oxobutyl phosphate binding; it reads ST. The active-site Proton donor is the His-88. Phe-113 contributes to the 5-amino-6-(D-ribitylamino)uracil binding site. Arg-127 is a (2S)-2-hydroxy-3-oxobutyl phosphate binding site.

The protein belongs to the DMRL synthase family.

The enzyme catalyses (2S)-2-hydroxy-3-oxobutyl phosphate + 5-amino-6-(D-ribitylamino)uracil = 6,7-dimethyl-8-(1-D-ribityl)lumazine + phosphate + 2 H2O + H(+). Its pathway is cofactor biosynthesis; riboflavin biosynthesis; riboflavin from 2-hydroxy-3-oxobutyl phosphate and 5-amino-6-(D-ribitylamino)uracil: step 1/2. Its function is as follows. Catalyzes the formation of 6,7-dimethyl-8-ribityllumazine by condensation of 5-amino-6-(D-ribitylamino)uracil with 3,4-dihydroxy-2-butanone 4-phosphate. This is the penultimate step in the biosynthesis of riboflavin. The protein is 6,7-dimethyl-8-ribityllumazine synthase of Clostridium novyi (strain NT).